The chain runs to 132 residues: U-scoloptoxin(05)-Er3a (132 aa).

An N-terminal signal peptide occupies residues 1–19; that stretch reads MRSWFVFVALLAVVFLPSS.

This sequence belongs to the scoloptoxin-05 family. Contains 5 disulfide bonds. In terms of tissue distribution, expressed by the venom gland.

The protein localises to the secreted. The protein is U-scoloptoxin(05)-Er3a of Ethmostigmus rubripes (Giant centipede).